A 249-amino-acid chain; its full sequence is Proteasome subunit alpha type-7-1A (249 aa).

It belongs to the peptidase T1A family. In terms of assembly, the 26S proteasome consists of a 20S proteasome core and two 19S regulatory subunits. The 20S proteasome core is composed of 28 subunits that are arranged in four stacked rings, resulting in a barrel-shaped structure. The two end rings are each formed by seven alpha subunits, and the two central rings are each formed by seven beta subunits. The catalytic chamber with the active sites is on the inside of the barrel. As to expression, testis specific.

The protein localises to the cytoplasm. The protein resides in the nucleus. Its function is as follows. The proteasome is a multicatalytic proteinase complex which is characterized by its ability to cleave peptides with Arg, Phe, Tyr, Leu, and Glu adjacent to the leaving group at neutral or slightly basic pH. The proteasome has an ATP-dependent proteolytic activity. This chain is Proteasome subunit alpha type-7-1A (Prosalpha4T1), found in Drosophila melanogaster (Fruit fly).